Reading from the N-terminus, the 469-residue chain is MALQTDTQAWRVEIGTRGLMFSNCVPLHLPEGQYHKLRLPVSAYEALAVARYGLVGSLWEVPAVNSALQCLAAAAPCKDVKIYPSCIFQVHAPMFVTIKTSLRCLNPHDLCLCLICVGAAILDIPLLCAPRDGAGARAAEGQAAAAQGGKLRVWGRLSPSSPTSLSLAFPYAGPPPVAWYRHSINLTRSEGVGIGKDCAQDHACPVPPQGHASSAADQAGVPERGRKRAHEGPGAGEAASAGRGDVALSQSRALLWRGLGWDTGRGRLAPGLAMSRDAASGSVHLDIQVDRAEEGWVCDVLLEPGPPTAREGCSLSMDPGLVTLKDAWTLFPLHPEHDAVVPPKEEIHVMAQGHLQGGTPSLWGFTFQEAACDQWVLRPRVWTAHSPIKMTVYNCGHKPLHIGPSTRLGLALFWPAERSDNLDAGRIFYQLTSGELYWGRTVARPPTLTLPVDELRPWPKLTPEEPMQH.

Residues 203 to 244 form a disordered region; it reads ACPVPPQGHASSAADQAGVPERGRKRAHEGPGAGEAASAGRG.

This sequence belongs to the epstein-barr virus LF1 family.

This is an uncharacterized protein from Homo sapiens (Human).